The following is a 103-amino-acid chain: SOSS complex subunit C (103 aa).

Belongs to the SOSS-C family. In terms of assembly, belongs to the multiprotein complex Integrator. Component of the SOSS complex, composed of soss-b (soss-b1/nabp2 or soss-b2/nabp1), soss-a/ints3 and soss-c/inip.

It is found in the nucleus. Functionally, component of the SOSS complex, a multiprotein complex that functions downstream of the MRN complex to promote DNA repair and G2/M checkpoint. The SOSS complex associates with single-stranded DNA at DNA lesions and influences diverse endpoints in the cellular DNA damage response including cell-cycle checkpoint activation, recombinational repair and maintenance of genomic stability. Required for efficient homologous recombination-dependent repair of double-strand breaks (DSBs). This is SOSS complex subunit C (inip) from Danio rerio (Zebrafish).